The sequence spans 329 residues: UDP-2,3-diacylglucosamine pyrophosphatase LpxG (329 aa).

Residues 2–24 (FVFVGSTVSLTAIVAAPVLTWIW) traverse the membrane as a helical segment. A divalent metal cation-binding residues include Asp-59, His-61, Asp-91, Asn-123, His-257, and His-259.

Belongs to the metallophosphoesterase superfamily. The cofactor is Mn(2+).

It localises to the cell inner membrane. It catalyses the reaction UDP-2,3-diacyl-alpha-D-glucosamine + H2O = 2,3-diacyl-alpha-D-glucosaminyl 1-phosphate + UMP + 2 H(+). Its pathway is glycolipid biosynthesis; lipid IV(A) biosynthesis. Hydrolyzes the pyrophosphate bond of UDP-2,3-diacylglucosamine to form 2,3-diacylglucosamine 1-phosphate (lipid X) and UMP by catalyzing the attack of water at the alpha-P atom. Involved in the biosynthesis of lipid A, a phosphorylated glycolipid that anchors the lipooligosaccharide (LOS) to the outer membrane of the cell. The chain is UDP-2,3-diacylglucosamine pyrophosphatase LpxG from Chlamydia muridarum (strain MoPn / Nigg).